We begin with the raw amino-acid sequence, 980 residues long: Envelope glycoprotein B (980 aa).

The span at 1-14 (MSSGCRSVGGSTWG) shows a compositional bias: polar residues. Disordered regions lie at residues 1–20 (MSSG…RGDG) and 88–118 (TTPS…TETP). Positions 1–86 (MSSGCRSVGG…LFGSCVVRAV (86 aa)) are cleaved as a signal peptide. Topologically, residues 87-849 (PTTPSPPTST…SGIASFLNNP (763 aa)) are virion surface. The segment covering 96-118 (TPTSMSTHSHGTVDPTLLPTETP) has biased composition (low complexity). Intrachain disulfides connect Cys-140–Cys-647, Cys-157–Cys-603, Cys-231–Cys-296, Cys-389–Cys-437, and Cys-668–Cys-708. Asn-165 carries N-linked (GlcNAc...) asparagine; by host glycosylation. The involved in fusion and/or binding to host membrane stretch occupies residues 197–203 (VWKGYSH). The N-linked (GlcNAc...) asparagine; by host glycan is linked to Asn-275. An involved in fusion and/or binding to host membrane region spans residues 282 to 290 (GWMPWRHYT). 6 N-linked (GlcNAc...) asparagine; by host glycosylation sites follow: Asn-380, Asn-423, Asn-497, Asn-514, Asn-515, and Asn-560. Low complexity predominate over residues 505–516 (LLNPNANNNNNT). The tract at residues 505-535 (LLNPNANNNNNTTRRRRSLLSVPEPQPTQDG) is disordered. Asn-727 and Asn-749 each carry an N-linked (GlcNAc...) asparagine; by host glycan. 2 hydrophobic membrane proximal region regions span residues 794–847 (IDSV…SFLN) and 823–843 (AVGT…SGIA). The helical transmembrane segment at 850–870 (FGGLAIGLLVIAGLVAAFFAY) threads the bilayer. Residues 871 to 980 (RYVMQIRSNP…NDTMENEKMV (110 aa)) lie on the Intravirion side of the membrane. The Golgi targeting motif lies at 925–928 (YMSM). The Internalization motif motif lies at 965–968 (YTRL).

This sequence belongs to the herpesviridae glycoprotein B family. As to quaternary structure, homotrimer; disulfide-linked. Binds to heparan sulfate proteoglycans. Interacts with gH/gL heterodimer. In terms of processing, a proteolytic cleavage by host furin generates two subunits that remain linked by disulfide bonds.

The protein resides in the virion membrane. The protein localises to the host cell membrane. Its subcellular location is the host endosome membrane. It is found in the host Golgi apparatus membrane. Its function is as follows. Envelope glycoprotein that forms spikes at the surface of virion envelope. Essential for the initial attachment to heparan sulfate moieties of the host cell surface proteoglycans. Involved in fusion of viral and cellular membranes leading to virus entry into the host cell. Following initial binding to its host receptors, membrane fusion is mediated by the fusion machinery composed at least of gB and the heterodimer gH/gL. May be involved in the fusion between the virion envelope and the outer nuclear membrane during virion egress. The chain is Envelope glycoprotein B from Equus caballus (Horse).